A 268-amino-acid polypeptide reads, in one-letter code: tRNA (guanine-N(1)-)-methyltransferase (268 aa).

Residues G113 and 133–138 (IGDYVL) each bind S-adenosyl-L-methionine. Positions 238-268 (RCPPDPFAHQGPVYEGDQLERPEGGEQGASR) are disordered.

This sequence belongs to the RNA methyltransferase TrmD family. Homodimer.

Its subcellular location is the cytoplasm. It catalyses the reaction guanosine(37) in tRNA + S-adenosyl-L-methionine = N(1)-methylguanosine(37) in tRNA + S-adenosyl-L-homocysteine + H(+). In terms of biological role, specifically methylates guanosine-37 in various tRNAs. The sequence is that of tRNA (guanine-N(1)-)-methyltransferase from Thermomicrobium roseum (strain ATCC 27502 / DSM 5159 / P-2).